Here is a 414-residue protein sequence, read N- to C-terminus: Putative competence-damage inducible protein (414 aa).

This sequence belongs to the CinA family.

In Clostridium novyi (strain NT), this protein is Putative competence-damage inducible protein.